The chain runs to 175 residues: Thermoresistant gluconokinase (175 aa).

15–22 (GVSGSGKS) contacts ATP.

It belongs to the gluconokinase GntK/GntV family.

The enzyme catalyses D-gluconate + ATP = 6-phospho-D-gluconate + ADP + H(+). It functions in the pathway carbohydrate acid metabolism; D-gluconate degradation. The chain is Thermoresistant gluconokinase (gntK) from Escherichia coli (strain K12).